We begin with the raw amino-acid sequence, 177 residues long: Large ribosomal subunit protein uL5 (177 aa).

It belongs to the universal ribosomal protein uL5 family. In terms of assembly, part of the 50S ribosomal subunit; part of the 5S rRNA/L5/L18/L25 subcomplex. Contacts the 5S rRNA and the P site tRNA. Forms a bridge to the 30S subunit in the 70S ribosome.

Functionally, this is one of the proteins that bind and probably mediate the attachment of the 5S RNA into the large ribosomal subunit, where it forms part of the central protuberance. In the 70S ribosome it contacts protein S13 of the 30S subunit (bridge B1b), connecting the 2 subunits; this bridge is implicated in subunit movement. Contacts the P site tRNA; the 5S rRNA and some of its associated proteins might help stabilize positioning of ribosome-bound tRNAs. In Wolbachia sp. subsp. Brugia malayi (strain TRS), this protein is Large ribosomal subunit protein uL5.